Here is a 211-residue protein sequence, read N- to C-terminus: Redox-sensing transcriptional repressor Rex (211 aa).

A DNA-binding region (H-T-H motif) is located at residues 17-56 (LYYRFIQNFAQEGMERISSKELSEAMKIDSATIRRDFSYF). 91-96 (GVGNLG) serves as a coordination point for NAD(+).

Belongs to the transcriptional regulatory Rex family. In terms of assembly, homodimer.

It localises to the cytoplasm. Functionally, modulates transcription in response to changes in cellular NADH/NAD(+) redox state. The chain is Redox-sensing transcriptional repressor Rex from Lysinibacillus sphaericus (strain C3-41).